The sequence spans 264 residues: Sec-independent protein translocase protein TatC (264 aa).

6 helical membrane-spanning segments follow: residues 20–40 (VVVITGAVTAFLLAFHAEPAE), 85–105 (FFAQVYIAALVGVTVSTPVAV), 131–151 (AVGLFAAGCAFSYIVVIPYIL), 175–195 (FVLQFLLAFGISFQLPLVMFA), 211–231 (IRYALLGIVIFGAAITPDGSG), and 232–252 (VTMWFVAGPMIGLYFAGMFFA).

The protein belongs to the TatC family. In terms of assembly, forms a complex with TatA.

The protein localises to the cell membrane. Part of the twin-arginine translocation (Tat) system that transports large folded proteins containing a characteristic twin-arginine motif in their signal peptide across membranes. The chain is Sec-independent protein translocase protein TatC from Cenarchaeum symbiosum (strain A).